We begin with the raw amino-acid sequence, 34 residues long: Photosystem II reaction center protein M (34 aa).

The helical transmembrane segment at 5–25 (ILGLTATALFIIIPTSFLLIL) threads the bilayer.

Belongs to the PsbM family. PSII is composed of 1 copy each of membrane proteins PsbA, PsbB, PsbC, PsbD, PsbE, PsbF, PsbH, PsbI, PsbJ, PsbK, PsbL, PsbM, PsbT, PsbX, PsbY, PsbZ, Psb30/Ycf12, at least 3 peripheral proteins of the oxygen-evolving complex and a large number of cofactors. It forms dimeric complexes.

The protein resides in the plastid. It localises to the chloroplast thylakoid membrane. One of the components of the core complex of photosystem II (PSII). PSII is a light-driven water:plastoquinone oxidoreductase that uses light energy to abstract electrons from H(2)O, generating O(2) and a proton gradient subsequently used for ATP formation. It consists of a core antenna complex that captures photons, and an electron transfer chain that converts photonic excitation into a charge separation. This subunit is found at the monomer-monomer interface. In Stigeoclonium helveticum (Green alga), this protein is Photosystem II reaction center protein M.